A 397-amino-acid chain; its full sequence is Putative serine/threonine-protein kinase R301 (397 aa).

The Protein kinase domain maps to Gln25–Leu397. Residues Val31–Ile39 and Lys53 each bind ATP. Asp218 acts as the Proton acceptor in catalysis.

It belongs to the protein kinase superfamily. Ser/Thr protein kinase family.

It localises to the virion. The catalysed reaction is L-seryl-[protein] + ATP = O-phospho-L-seryl-[protein] + ADP + H(+). It catalyses the reaction L-threonyl-[protein] + ATP = O-phospho-L-threonyl-[protein] + ADP + H(+). In Acanthamoeba polyphaga (Amoeba), this protein is Putative serine/threonine-protein kinase R301.